Reading from the N-terminus, the 455-residue chain is Zinc finger protein ZPR1 homolog (455 aa).

2 consecutive C4-type zinc fingers follow at residues Cys-28–Cys-60 and Cys-247–Cys-279.

This sequence belongs to the ZPR1 family.

It is found in the nucleus. The chain is Zinc finger protein ZPR1 homolog from Caenorhabditis elegans.